Reading from the N-terminus, the 454-residue chain is Bifunctional protein GlmU (454 aa).

The tract at residues 1-226 is pyrophosphorylase; that stretch reads MALNVVILAA…AIEVEGANNR (226 aa). Residues 8–11, Lys-22, Gln-73, 78–79, 100–102, Gly-137, Glu-151, Asn-166, and Asn-224 each bind UDP-N-acetyl-alpha-D-glucosamine; these read LAAG, GT, and YGD. Mg(2+) is bound at residue Asp-102. Mg(2+) is bound at residue Asn-224. The linker stretch occupies residues 227–247; sequence VQLAQLERAYQAREAEKLMLA. The N-acetyltransferase stretch occupies residues 248–454; that stretch reads GANLRDPHRI…DWKRPVKIKK (207 aa). Residues Arg-330 and Lys-348 each contribute to the UDP-N-acetyl-alpha-D-glucosamine site. The active-site Proton acceptor is the His-360. The UDP-N-acetyl-alpha-D-glucosamine site is built by Tyr-363 and Asn-374. Acetyl-CoA-binding positions include Ala-377, 383–384, Ser-402, Ala-420, and Arg-437; that span reads NY.

This sequence in the N-terminal section; belongs to the N-acetylglucosamine-1-phosphate uridyltransferase family. It in the C-terminal section; belongs to the transferase hexapeptide repeat family. Homotrimer. Requires Mg(2+) as cofactor.

Its subcellular location is the cytoplasm. It carries out the reaction alpha-D-glucosamine 1-phosphate + acetyl-CoA = N-acetyl-alpha-D-glucosamine 1-phosphate + CoA + H(+). The enzyme catalyses N-acetyl-alpha-D-glucosamine 1-phosphate + UTP + H(+) = UDP-N-acetyl-alpha-D-glucosamine + diphosphate. Its pathway is nucleotide-sugar biosynthesis; UDP-N-acetyl-alpha-D-glucosamine biosynthesis; N-acetyl-alpha-D-glucosamine 1-phosphate from alpha-D-glucosamine 6-phosphate (route II): step 2/2. It functions in the pathway nucleotide-sugar biosynthesis; UDP-N-acetyl-alpha-D-glucosamine biosynthesis; UDP-N-acetyl-alpha-D-glucosamine from N-acetyl-alpha-D-glucosamine 1-phosphate: step 1/1. It participates in bacterial outer membrane biogenesis; LPS lipid A biosynthesis. Functionally, catalyzes the last two sequential reactions in the de novo biosynthetic pathway for UDP-N-acetylglucosamine (UDP-GlcNAc). The C-terminal domain catalyzes the transfer of acetyl group from acetyl coenzyme A to glucosamine-1-phosphate (GlcN-1-P) to produce N-acetylglucosamine-1-phosphate (GlcNAc-1-P), which is converted into UDP-GlcNAc by the transfer of uridine 5-monophosphate (from uridine 5-triphosphate), a reaction catalyzed by the N-terminal domain. This chain is Bifunctional protein GlmU, found in Shewanella putrefaciens (strain CN-32 / ATCC BAA-453).